We begin with the raw amino-acid sequence, 126 residues long: Histone H2B 1.1 (126 aa).

A compositionally biased stretch (low complexity) spans 1 to 12; sequence MPEPAKSAPAPK. The disordered stretch occupies residues 1–35; that stretch reads MPEPAKSAPAPKKGSKKAVTKTQKKDGKKRRKSRK. N6-acetyllysine is present on residues lysine 6 and lysine 13. Serine 15 bears the Phosphoserine mark. An N6-acetyllysine mark is found at lysine 16 and lysine 21. An O-linked (GlcNAc) serine glycan is attached at serine 113. A Glycyl lysine isopeptide (Lys-Gly) (interchain with G-Cter in ubiquitin) cross-link involves residue lysine 121.

The protein belongs to the histone H2B family. As to quaternary structure, the nucleosome is a histone octamer containing two molecules each of H2A, H2B, H3 and H4 assembled in one H3-H4 heterotetramer and two H2A-H2B heterodimers. The octamer wraps approximately 147 bp of DNA. Post-translationally, monoubiquitination of Lys-121 by BRE1 gives a specific tag for epigenetic transcriptional activation and is also prerequisite for histone H3 'Lys-4' and 'Lys-79' methylation. Phosphorylated on Ser-15 during developmentally programmed apoptosis; which may facilitate apoptotic chromatin condensation. In terms of processing, glcNAcylation at Ser-113 promotes monoubiquitination of Lys-121. It fluctuates in response to extracellular glucose, and associates with transcribed genes.

The protein resides in the nucleus. The protein localises to the chromosome. Core component of nucleosome. Nucleosomes wrap and compact DNA into chromatin, limiting DNA accessibility to the cellular machineries which require DNA as a template. Histones thereby play a central role in transcription regulation, DNA repair, DNA replication and chromosomal stability. DNA accessibility is regulated via a complex set of post-translational modifications of histones, also called histone code, and nucleosome remodeling. The chain is Histone H2B 1.1 from Xenopus laevis (African clawed frog).